We begin with the raw amino-acid sequence, 423 residues long: Carboxypeptidase S1 (423 aa).

Disulfide bonds link C8–C68, C55–C300, C223–C246, and C230–C239. The active site involves S143. N-linked (GlcNAc...) asparagine glycosylation is present at N200. D340 is a catalytic residue. C343 provides a ligand contact to substrate. H397 is a catalytic residue. E398 contributes to the substrate binding site.

Belongs to the peptidase S10 family.

It carries out the reaction Preferential release of a C-terminal arginine or lysine residue.. The chain is Carboxypeptidase S1 from Penicillium janthinellum (Penicillium vitale).